The primary structure comprises 259 residues: Protein BEAN1 (259 aa).

A helical membrane pass occupies residues Val-36 to Val-56. Basic residues predominate over residues Arg-71–His-89. Disordered stretches follow at residues Arg-71 to Glu-91 and Val-152 to Val-259. The span at Leu-171–Gly-187 shows a compositional bias: polar residues. Positions Gly-221 to Pro-230 are enriched in low complexity.

In terms of assembly, interacts with NEDD4.

The protein resides in the membrane. In Homo sapiens (Human), this protein is Protein BEAN1 (BEAN1).